The chain runs to 490 residues: Aspartyl/glutamyl-tRNA(Asn/Gln) amidotransferase subunit B (490 aa).

The protein belongs to the GatB/GatE family. GatB subfamily. In terms of assembly, heterotrimer of A, B and C subunits.

It catalyses the reaction L-glutamyl-tRNA(Gln) + L-glutamine + ATP + H2O = L-glutaminyl-tRNA(Gln) + L-glutamate + ADP + phosphate + H(+). It carries out the reaction L-aspartyl-tRNA(Asn) + L-glutamine + ATP + H2O = L-asparaginyl-tRNA(Asn) + L-glutamate + ADP + phosphate + 2 H(+). Functionally, allows the formation of correctly charged Asn-tRNA(Asn) or Gln-tRNA(Gln) through the transamidation of misacylated Asp-tRNA(Asn) or Glu-tRNA(Gln) in organisms which lack either or both of asparaginyl-tRNA or glutaminyl-tRNA synthetases. The reaction takes place in the presence of glutamine and ATP through an activated phospho-Asp-tRNA(Asn) or phospho-Glu-tRNA(Gln). This chain is Aspartyl/glutamyl-tRNA(Asn/Gln) amidotransferase subunit B, found in Methylorubrum extorquens (strain PA1) (Methylobacterium extorquens).